The chain runs to 758 residues: Catalase-peroxidase (758 aa).

A compositionally biased stretch (polar residues) spans 1-10; it reads MSDTQDNAPV. The interval 1–57 is disordered; it reads MSDTQDNAPVSAQGVDQKAAAGCPVAHDSVTAHGSESESPAIDSPSAVGGGRPRTNR. Residues 128–250 constitute a cross-link (tryptophyl-tyrosyl-methioninium (Trp-Tyr) (with M-276)); the sequence is WHAAGTYRIH…VGATEMGLIY (123 aa). The Proton acceptor role is filled by histidine 129. The tryptophyl-tyrosyl-methioninium (Tyr-Met) (with W-128) cross-link spans 250–276; sequence YVNPEGPRGNADPASAAHFIRETFRRM. Histidine 291 is a heme b binding site.

This sequence belongs to the peroxidase family. Peroxidase/catalase subfamily. Homodimer or homotetramer. Heme b is required as a cofactor. In terms of processing, formation of the three residue Trp-Tyr-Met cross-link is important for the catalase, but not the peroxidase activity of the enzyme.

The enzyme catalyses H2O2 + AH2 = A + 2 H2O. It catalyses the reaction 2 H2O2 = O2 + 2 H2O. Bifunctional enzyme with both catalase and broad-spectrum peroxidase activity. The sequence is that of Catalase-peroxidase from Salinispora tropica (strain ATCC BAA-916 / DSM 44818 / JCM 13857 / NBRC 105044 / CNB-440).